We begin with the raw amino-acid sequence, 387 residues long: Oleoyl-12-hydroxylase FAH12 (387 aa).

The disordered stretch occupies residues 1 to 34 (MGGGGRMSTVITSNNSEKKGGSSHLKRAPHTKPP). The next 2 membrane-spanning stretches (helical) occupy residues 61-81 (AYDVCLSFLFYSIATNFFPYI) and 88-108 (VAWLVYWLFQGCILTGLWVIG). The short motif at 109 to 113 (HECGH) is the Histidine box-1 element. Residues 121–141 (LADDIVGLIVHSALLVPYFSW) form a helical membrane-spanning segment. Positions 145 to 149 (HRRHH) match the Histidine box-2 motif. A run of 3 helical transmembrane segments spans residues 183 to 203 (VLTLAATLLLGWPLYLAFNVS), 229 to 249 (IYIADLGIFATTFVLYQATMA), and 253 to 273 (AWVMRIYGVPLLIVNCFLVMI). The short motif at 319–323 (HVAHH) is the Histidine box-3 element.

The protein belongs to the fatty acid desaturase type 1 family. In terms of tissue distribution, expressed in seeds. Barely detected in leaves.

The protein resides in the microsome membrane. It carries out the reaction a 1-acyl-2-(9Z)-octadecenoyl-sn-glycero-3-phosphocholine + 2 Fe(II)-[cytochrome b5] + O2 + 2 H(+) = a 1-acyl-2-[(R)-12-hydroxyoleoyl]-sn-glycero-3-phosphocholine + 2 Fe(III)-[cytochrome b5] + H2O. It functions in the pathway lipid metabolism; monounsaturated fatty acid biosynthesis. With respect to regulation, inhibited by oleoyloxyethyl phosphocholine. Functionally, oleoyl-12-hydroxylase involved in the biosynthesis of ricinoleate (12-hydroxy-cis-9-octadecenoate), the major fatty acid constituent of the oil seeds from castor bean plants. Catalyzes the hydroxylation at the 12-position of 1-acyl-2-oleoyl-sn-glycero-3-phosphocholine (2-oleoyl-PC), which seems to be the actual physiological subtrate. It uses cytochrome b5 as an electron donor. May also be involved in the production of lesquerolic acid (14-hydroxyeicos-cis-ll-enoic acid) in vitro. This chain is Oleoyl-12-hydroxylase FAH12, found in Ricinus communis (Castor bean).